The chain runs to 144 residues: Major allergen Blo t 12 (144 aa).

Residues 1–20 form the signal peptide; the sequence is MKSVLIFLVAIALFSANIVS. A disordered region spans residues 24 to 77; it reads QTTRGRHTEPDDHHEKPTTQCTHEETTSTQHHHEEVVTTQTPHHEEKTTTEETH. The 53-residue stretch at 92–144 folds into the Chitin-binding type-2 domain; that stretch reads HVVCHEEGPIHIQEMCNKYIICSKSGSLWYITVMPCSIGTKFDPISRNCVLDN. A disulfide bridge links Cys-127 with Cys-140.

The protein is Major allergen Blo t 12 of Blomia tropicalis (Mite).